Consider the following 457-residue polypeptide: NADH-quinone oxidoreductase subunit D (457 aa).

The tract at residues Met1 to Glu23 is disordered.

The protein belongs to the complex I 49 kDa subunit family. In terms of assembly, NDH-1 is composed of 14 different subunits. Subunits NuoB, C, D, E, F, and G constitute the peripheral sector of the complex.

It is found in the cell membrane. It catalyses the reaction a quinone + NADH + 5 H(+)(in) = a quinol + NAD(+) + 4 H(+)(out). In terms of biological role, NDH-1 shuttles electrons from NADH, via FMN and iron-sulfur (Fe-S) centers, to quinones in the respiratory chain. The immediate electron acceptor for the enzyme in this species is believed to be a menaquinone. Couples the redox reaction to proton translocation (for every two electrons transferred, four hydrogen ions are translocated across the cytoplasmic membrane), and thus conserves the redox energy in a proton gradient. The sequence is that of NADH-quinone oxidoreductase subunit D from Parafrankia sp. (strain EAN1pec).